The sequence spans 205 residues: Metal-independent carbonic anhydrase (205 aa).

The signal sequence occupies residues 1 to 24 (MNLFKPRILVLFAATALISGIAIV). Residues T106 and Y124 each contribute to the hydrogencarbonate site.

It belongs to the iota-class carbonic anhydrase family. In terms of assembly, homotetramer; dimer of dimers. The cofactor is Does not require a metal cofactor..

The catalysed reaction is hydrogencarbonate + H(+) = CO2 + H2O. With respect to regulation, activity is not affected by EDTA or 2,6-pyridinedicarboxylic acid (PDA). Activity is not affected by addition of most divalent metal ions, except zinc ions which decrease the activity. Inhibited by the iodide ion. In terms of biological role, catalyzes the hydration of carbon dioxide (CO2) to bicarbonate (HCO3(-)). Has only very low bicarbonate dehydration activity. May function even in metal-poor environments. This is Metal-independent carbonic anhydrase from Nostoc sp. (strain PCC 7120 / SAG 25.82 / UTEX 2576).